The primary structure comprises 62 residues: Omega-conotoxin-like Bu11 (62 aa).

An N-terminal signal peptide occupies residues 1–7 (ACQLITA). Positions 8-27 (EDSRGTQLHRALRSTSKVSK) are excised as a propeptide. 3 disulfides stabilise this stretch: Cys31/Cys46, Cys38/Cys49, and Cys45/Cys56.

It belongs to the conotoxin O1 superfamily. In terms of tissue distribution, expressed by the venom duct.

The protein localises to the secreted. Omega-conotoxins act at presynaptic membranes, they bind and block voltage-gated calcium channels (Cav). This chain is Omega-conotoxin-like Bu11, found in Conus bullatus (Bubble cone).